The following is a 151-amino-acid chain: Arginine repressor (151 aa).

The protein belongs to the ArgR family.

The protein resides in the cytoplasm. It participates in amino-acid biosynthesis; L-arginine biosynthesis [regulation]. Its function is as follows. Regulates arginine biosynthesis genes. The polypeptide is Arginine repressor (Clostridium novyi (strain NT)).